Consider the following 477-residue polypeptide: MDFESVIGLEVHAELSTKTKIYCGCTTEFGGKPNTHVCPVCLGLPGSLPQLNKKVVDYAIKAGLALNCEINKSSRLDRKNYFYPDCPKNYQITQDELPICKNGYIEIELENGEKKRVGIERIHIEEDAGKLLHTKAGTLVDFNRAGVPLIEIVSRPDMSSPEEASQYLQKLRSILASIEVSDCKMEEGSLRCDANISVKPKGDTKLGVRAEIKNMNSFKSLEKAVAYETKRHIELIQKGEKLQQETRRWDEANNITIAMRSKEAANDYRYFPEGDSVAITINDKYIDEIRATIPELPHEKAERFVEEFKIPKYDASVLTLTMEMANFFEETAKLSGDAKASSNWLMGDISRLLNEQNMAVEELKFNPTQLSELIKLISSGTISNNIGKKVVEEMFNTGKSPKVIVEEKGLVQNNDEGAILEVVKRIIDENPQSIEDYRNGKNRVLGFLVGLVMKETRGKANPQIVNKLINEEVNKLA.

It belongs to the GatB/GatE family. GatB subfamily. In terms of assembly, heterotrimer of A, B and C subunits.

The enzyme catalyses L-glutamyl-tRNA(Gln) + L-glutamine + ATP + H2O = L-glutaminyl-tRNA(Gln) + L-glutamate + ADP + phosphate + H(+). It catalyses the reaction L-aspartyl-tRNA(Asn) + L-glutamine + ATP + H2O = L-asparaginyl-tRNA(Asn) + L-glutamate + ADP + phosphate + 2 H(+). In terms of biological role, allows the formation of correctly charged Asn-tRNA(Asn) or Gln-tRNA(Gln) through the transamidation of misacylated Asp-tRNA(Asn) or Glu-tRNA(Gln) in organisms which lack either or both of asparaginyl-tRNA or glutaminyl-tRNA synthetases. The reaction takes place in the presence of glutamine and ATP through an activated phospho-Asp-tRNA(Asn) or phospho-Glu-tRNA(Gln). This chain is Aspartyl/glutamyl-tRNA(Asn/Gln) amidotransferase subunit B, found in Clostridium tetani (strain Massachusetts / E88).